Reading from the N-terminus, the 568-residue chain is Transport inhibitor response 1-like protein Os11g0515500 (568 aa).

The 45-residue stretch at 1–45 (MVFFPEEVVEHILGFLASHRDRNAVSLVCREWYRVERLSRRSVLV) folds into the F-box domain. 1D-myo-inositol hexakisphosphate contacts are provided by residues Lys69, 103–104 (KR), and Arg335. Residues 338–343 (PANANA) are interaction with auxin-responsive proteins. 390-392 (SFR) provides a ligand contact to 1D-myo-inositol hexakisphosphate. An interaction with auxin-responsive proteins region spans residues 394 to 398 (CVLDP). Arg425 lines the 1D-myo-inositol hexakisphosphate pocket. Residues 453-454 (AF) form an interaction with auxin-responsive proteins region. 1D-myo-inositol hexakisphosphate contacts are provided by residues 473 to 474 (KK) and Arg498.

Part of a SCF (SKP1-cullin-F-box) protein ligase complex. May interact with auxin and auxin-responsive proteins.

It is found in the nucleus. It participates in protein modification; protein ubiquitination. This chain is Transport inhibitor response 1-like protein Os11g0515500, found in Oryza sativa subsp. japonica (Rice).